Consider the following 500-residue polypeptide: Abscisic acid 8'-hydroxylase 3 (500 aa).

The chain crosses the membrane as a helical span at residues 3-23 (ASFVIVIVISFFISLAFMCYV). Cys-426 serves as a coordination point for heme.

Belongs to the cytochrome P450 family. Heme serves as cofactor.

It localises to the membrane. It carries out the reaction 2-cis-(+)-abscisate + reduced [NADPH--hemoprotein reductase] + O2 = (+)-8'-hydroxyabscisate + oxidized [NADPH--hemoprotein reductase] + H2O + H(+). It functions in the pathway plant hormone degradation; abscisic acid degradation. Involved in the oxidative degradation of abscisic acid. The chain is Abscisic acid 8'-hydroxylase 3 (CYP707A7) from Oryza sativa subsp. indica (Rice).